The sequence spans 307 residues: 4-hydroxythreonine-4-phosphate dehydrogenase (307 aa).

Residues His121 and Thr122 each coordinate substrate. 3 residues coordinate a divalent metal cation: His150, His189, and His246. The substrate site is built by Lys254, Asn263, and Arg272.

It belongs to the PdxA family. In terms of assembly, homodimer. It depends on Zn(2+) as a cofactor. The cofactor is Mg(2+). Requires Co(2+) as cofactor.

The protein resides in the cytoplasm. The enzyme catalyses 4-(phosphooxy)-L-threonine + NAD(+) = 3-amino-2-oxopropyl phosphate + CO2 + NADH. The protein operates within cofactor biosynthesis; pyridoxine 5'-phosphate biosynthesis; pyridoxine 5'-phosphate from D-erythrose 4-phosphate: step 4/5. Functionally, catalyzes the NAD(P)-dependent oxidation of 4-(phosphooxy)-L-threonine (HTP) into 2-amino-3-oxo-4-(phosphooxy)butyric acid which spontaneously decarboxylates to form 3-amino-2-oxopropyl phosphate (AHAP). This chain is 4-hydroxythreonine-4-phosphate dehydrogenase, found in Campylobacter fetus subsp. fetus (strain 82-40).